We begin with the raw amino-acid sequence, 175 residues long: DASH complex subunit DAM1 (175 aa).

The disordered stretch occupies residues 1–39 (MAPEDTNPQSSHRRTRSTSRSRPTTPLRPSSRSSFRSSA). Residues 20–39 (RSRPTTPLRPSSRSSFRSSA) are compositionally biased toward low complexity.

The protein belongs to the DASH complex DAM1 family. As to quaternary structure, component of the DASH complex consisting of ASK1, DAD1, DAD2, DAD3, DAD4, DAM1, DUO1, HSK3, SPC19 and SPC34, with a stoichiometry of one copy of each subunit per complex. Multiple DASH complexes oligomerize to form a ring that encircles spindle microtubules and organizes the rod-like NDC80 complexes of the outer kinetochore. DASH complex oligomerization strengthens microtubule attachments. On cytoplasmic microtubules, DASH complexes appear to form patches instead of rings.

The protein resides in the chromosome. The protein localises to the centromere. Its subcellular location is the kinetochore. It localises to the cytoplasm. It is found in the cytoskeleton. The protein resides in the spindle. The protein localises to the nucleus. Functionally, component of the DASH complex that connects microtubules with kinetochores and couples microtubule depolymerisation to chromosome movement; it is involved in retrieving kinetochores to the spindle poles before their re-orientation on the spindle in early mitosis and allows microtubule depolymerization to pull chromosomes apart and resist detachment during anaphase. Kinetochores, consisting of a centromere-associated inner segment and a microtubule-contacting outer segment, play a crucial role in chromosome segregation by mediating the physical connection between centromeric DNA and microtubules. Kinetochores also serve as an input point for the spindle assembly checkpoint, which delays anaphase until all chromosomes have bioriented on the mitotic spindle. In Chaetomium thermophilum (strain DSM 1495 / CBS 144.50 / IMI 039719) (Thermochaetoides thermophila), this protein is DASH complex subunit DAM1.